A 689-amino-acid chain; its full sequence is Elongation factor G (689 aa).

One can recognise a tr-type G domain in the interval 8–282 (LNTRNIGIMA…AVVDYLPSPI (275 aa)). GTP contacts are provided by residues 17–24 (AHIDAGKT), 81–85 (DTPGH), and 135–138 (NKMD).

Belongs to the TRAFAC class translation factor GTPase superfamily. Classic translation factor GTPase family. EF-G/EF-2 subfamily.

It localises to the cytoplasm. Its function is as follows. Catalyzes the GTP-dependent ribosomal translocation step during translation elongation. During this step, the ribosome changes from the pre-translocational (PRE) to the post-translocational (POST) state as the newly formed A-site-bound peptidyl-tRNA and P-site-bound deacylated tRNA move to the P and E sites, respectively. Catalyzes the coordinated movement of the two tRNA molecules, the mRNA and conformational changes in the ribosome. The polypeptide is Elongation factor G (Mycoplasma capricolum subsp. capricolum (strain California kid / ATCC 27343 / NCTC 10154)).